A 384-amino-acid polypeptide reads, in one-letter code: S-adenosylmethionine synthase (384 aa).

Histidine 15 is a binding site for ATP. Aspartate 17 contributes to the Mg(2+) binding site. K(+) is bound at residue glutamate 43. Glutamate 56 and glutamine 99 together coordinate L-methionine. The segment at 99 to 109 (QSPDINQGVDR) is flexible loop. ATP contacts are provided by residues 164-166 (DAK), 230-231 (RF), aspartate 239, 245-246 (RK), alanine 262, and lysine 266. Residue aspartate 239 coordinates L-methionine. Lysine 270 is a binding site for L-methionine.

It belongs to the AdoMet synthase family. Homotetramer; dimer of dimers. Requires Mg(2+) as cofactor. The cofactor is K(+).

Its subcellular location is the cytoplasm. The catalysed reaction is L-methionine + ATP + H2O = S-adenosyl-L-methionine + phosphate + diphosphate. It functions in the pathway amino-acid biosynthesis; S-adenosyl-L-methionine biosynthesis; S-adenosyl-L-methionine from L-methionine: step 1/1. Functionally, catalyzes the formation of S-adenosylmethionine (AdoMet) from methionine and ATP. The overall synthetic reaction is composed of two sequential steps, AdoMet formation and the subsequent tripolyphosphate hydrolysis which occurs prior to release of AdoMet from the enzyme. This chain is S-adenosylmethionine synthase, found in Cronobacter sakazakii (strain ATCC BAA-894) (Enterobacter sakazakii).